A 498-amino-acid polypeptide reads, in one-letter code: Putative BTB/POZ domain-containing protein L788 (498 aa).

A BTB domain is found at 28–99; it reads TDIILVLEDD…FYGQKIKSGN (72 aa).

It belongs to the mimivirus BTB/WD family.

The polypeptide is Putative BTB/POZ domain-containing protein L788 (Acanthamoeba polyphaga (Amoeba)).